The sequence spans 209 residues: MSNVTVVSHPLVQHKLTKMRDKTTSTKTFRALMRETATLICYEVTRDLPMDEVQIETPVAPTKAYEIAGKKLVFAPILRTGLGMCEGMLDLVPSARVAHIGLYRDHETLEAVEYYFKAPEDIAGRLVIVVDPMLATGHSAIAAIARLKHYGVTNLRFVCLLAAQAGVDALREAHPDVPIWTAAIDQTLNDHGYIVPGLGDAGDRTFGTR.

5-phospho-alpha-D-ribose 1-diphosphate contacts are provided by residues arginine 79, arginine 104, and 131-139; that span reads DPMLATGHS. Uracil is bound by residues isoleucine 194 and 199 to 201; that span reads GDA. Aspartate 200 contacts 5-phospho-alpha-D-ribose 1-diphosphate.

It belongs to the UPRTase family. Mg(2+) serves as cofactor.

It carries out the reaction UMP + diphosphate = 5-phospho-alpha-D-ribose 1-diphosphate + uracil. Its pathway is pyrimidine metabolism; UMP biosynthesis via salvage pathway; UMP from uracil: step 1/1. Allosterically activated by GTP. Catalyzes the conversion of uracil and 5-phospho-alpha-D-ribose 1-diphosphate (PRPP) to UMP and diphosphate. The chain is Uracil phosphoribosyltransferase from Caulobacter vibrioides (strain ATCC 19089 / CIP 103742 / CB 15) (Caulobacter crescentus).